Consider the following 304-residue polypeptide: Ribosomal RNA small subunit methyltransferase H (304 aa).

S-adenosyl-L-methionine-binding positions include 36–38 (GGH), Asp-53, Phe-79, Asp-98, and Gln-105.

Belongs to the methyltransferase superfamily. RsmH family.

The protein resides in the cytoplasm. The enzyme catalyses cytidine(1402) in 16S rRNA + S-adenosyl-L-methionine = N(4)-methylcytidine(1402) in 16S rRNA + S-adenosyl-L-homocysteine + H(+). In terms of biological role, specifically methylates the N4 position of cytidine in position 1402 (C1402) of 16S rRNA. This Myxococcus xanthus (strain DK1622) protein is Ribosomal RNA small subunit methyltransferase H.